A 195-amino-acid chain; its full sequence is Nicotinamide riboside kinase 2 (195 aa).

Residue 9–17 (GVTNGGKTT) participates in ATP binding. Residues Thr-16 and Asp-35 each coordinate Mg(2+). Asp-35 (proton acceptor) is an active-site residue. Substrate is bound by residues 35-38 (DDFF) and 54-55 (WD). Position 130 (Arg-130) interacts with ATP. Residues Arg-131 and 136–137 (YM) contribute to the substrate site. Residues 134–136 (RTY) and 174–176 (KSP) contribute to the ATP site.

This sequence belongs to the uridine kinase family. NRK subfamily. As to quaternary structure, monomer. Interacts with ITGB1 alone or when associated with alpha-7, but not with alpha-5. As to expression, expressed in skeletal muscle (at protein level).

The catalysed reaction is beta-nicotinamide D-riboside + ATP = beta-nicotinamide D-ribonucleotide + ADP + H(+). It carries out the reaction beta-D-ribosylnicotinate + ATP = nicotinate beta-D-ribonucleotide + ADP + H(+). It functions in the pathway cofactor biosynthesis; NAD(+) biosynthesis. Functionally, catalyzes the phosphorylation of nicotinamide riboside (NR) and nicotinic acid riboside (NaR) to form nicotinamide mononucleotide (NMN) and nicotinic acid mononucleotide (NaMN). Reduces laminin matrix deposition and cell adhesion to laminin, but not to fibronectin. Involved in the regulation of PXN at the protein level and of PXN tyrosine phosphorylation. May play a role in the regulation of terminal myogenesis. This Mus musculus (Mouse) protein is Nicotinamide riboside kinase 2 (Nmrk2).